A 49-amino-acid chain; its full sequence is Large ribosomal subunit protein bL33A (49 aa).

The protein belongs to the bacterial ribosomal protein bL33 family.

The protein is Large ribosomal subunit protein bL33A of Staphylococcus saprophyticus subsp. saprophyticus (strain ATCC 15305 / DSM 20229 / NCIMB 8711 / NCTC 7292 / S-41).